Here is a 123-residue protein sequence, read N- to C-terminus: Holo-[acyl-carrier-protein] synthase (123 aa).

Residues Asp-9 and Glu-57 each contribute to the Mg(2+) site.

The protein belongs to the P-Pant transferase superfamily. AcpS family. The cofactor is Mg(2+).

Its subcellular location is the cytoplasm. It carries out the reaction apo-[ACP] + CoA = holo-[ACP] + adenosine 3',5'-bisphosphate + H(+). In terms of biological role, transfers the 4'-phosphopantetheine moiety from coenzyme A to a Ser of acyl-carrier-protein. This Streptomyces avermitilis (strain ATCC 31267 / DSM 46492 / JCM 5070 / NBRC 14893 / NCIMB 12804 / NRRL 8165 / MA-4680) protein is Holo-[acyl-carrier-protein] synthase.